We begin with the raw amino-acid sequence, 36 residues long: Photosystem I reaction center subunit VIII (36 aa).

A helical transmembrane segment spans residues 1-21 (MITFSFPSIFVPLVGLVFPAI).

This sequence belongs to the PsaI family.

The protein localises to the plastid. The protein resides in the chloroplast thylakoid membrane. Its function is as follows. May help in the organization of the PsaL subunit. The protein is Photosystem I reaction center subunit VIII of Coffea arabica (Arabian coffee).